The chain runs to 97 residues: ESAT-6-like protein EsxA (97 aa).

Belongs to the WXG100 family. ESAT-6 subfamily. As to quaternary structure, forms a tight 1:1 complex with EsxB. Forms a complex with EccC and EsxB, probably wholly mediated by EsxB.

The protein resides in the secreted. May help regulate assembly and function of the type VII secretion system (T7SS). EsxA disassembles pre-formed EccC-EsxB multimers, possibly by making EccC-EsxA-EsxB trimers instead of EccC-EsxB-EsxB-EccC tetramers. The polypeptide is ESAT-6-like protein EsxA (Thermomonospora curvata (strain ATCC 19995 / DSM 43183 / JCM 3096 / KCTC 9072 / NBRC 15933 / NCIMB 10081 / Henssen B9)).